Here is a 459-residue protein sequence, read N- to C-terminus: MKISVRNLEPTKVKLTVTVEPEELNPYLDAARKEIAKQVNVPGFRKGHVPGKIIDQRIGFAAVAGEAVNDAVPELYSKALDEKKIRPMAQPEFDVQDVPQSANDETKLKFTATVERRPDIELPEIDGLEIAISKPEVKDEDVDKRLETLRQRFGTLVGVDRPAAKGDFANIDLTAEIDGETVDSQEGVSYELGSNTMLDGLDEALDGLSAGEETTFEGTLEAGEHEGQKATVKVKVNSVKAEELPELNDEFASEASEFDTLDELKADIRKAAAQDAEGRQATEARDAFIAKLQEGLEIPVPKGVKANMVEEQLKGMTPDPEKATKEQKAQAEETVEKDLRDQMVLDALAEKLDVQVSQSDVFNFLASIAQQYGMDPNNFIQAIIKNGQLGSAVQEVGRSKGLLAGMRAVKFTADGEVVDLSAFLGEAAEDEESESVEAASAAAAVADELSAKDDAKDAE.

Residues 166 to 245 enclose the PPIase FKBP-type domain; the sequence is GDFANIDLTA…VNSVKAEELP (80 aa).

Belongs to the FKBP-type PPIase family. Tig subfamily.

Its subcellular location is the cytoplasm. The catalysed reaction is [protein]-peptidylproline (omega=180) = [protein]-peptidylproline (omega=0). Its function is as follows. Involved in protein export. Acts as a chaperone by maintaining the newly synthesized protein in an open conformation. Functions as a peptidyl-prolyl cis-trans isomerase. The polypeptide is Trigger factor (Bifidobacterium longum (strain DJO10A)).